The chain runs to 311 residues: 4-diphosphocytidyl-2-C-methyl-D-erythritol kinase (311 aa).

Lys11 is a catalytic residue. Residue Pro94 to Ala104 coordinates ATP. The active site involves Asp136.

It belongs to the GHMP kinase family. IspE subfamily.

It carries out the reaction 4-CDP-2-C-methyl-D-erythritol + ATP = 4-CDP-2-C-methyl-D-erythritol 2-phosphate + ADP + H(+). Its pathway is isoprenoid biosynthesis; isopentenyl diphosphate biosynthesis via DXP pathway; isopentenyl diphosphate from 1-deoxy-D-xylulose 5-phosphate: step 3/6. In terms of biological role, catalyzes the phosphorylation of the position 2 hydroxy group of 4-diphosphocytidyl-2C-methyl-D-erythritol. The sequence is that of 4-diphosphocytidyl-2-C-methyl-D-erythritol kinase from Synechococcus sp. (strain JA-2-3B'a(2-13)) (Cyanobacteria bacterium Yellowstone B-Prime).